The following is a 552-amino-acid chain: Phosphoribosylaminoimidazole carboxylase (552 aa).

The 188-residue stretch at 108–295 (KQHLQVFKIA…QFEAHLRAIC (188 aa)) folds into the ATP-grasp domain. 134–189 (GQEFGYPFVLKSKTLAYDGRGNYVVHQPSEIPTAIKALGDRPLYVEKFVPFSMEIA) contributes to the ATP binding site.

In the C-terminal section; belongs to the AIR carboxylase family. Class I subfamily.

It catalyses the reaction 5-amino-1-(5-phospho-D-ribosyl)imidazole-4-carboxylate + H(+) = 5-amino-1-(5-phospho-beta-D-ribosyl)imidazole + CO2. The protein operates within purine metabolism; IMP biosynthesis via de novo pathway; 5-amino-1-(5-phospho-D-ribosyl)imidazole-4-carboxylate from 5-amino-1-(5-phospho-D-ribosyl)imidazole (carboxylase route): step 1/1. The polypeptide is Phosphoribosylaminoimidazole carboxylase (ade6) (Schizosaccharomyces pombe (strain 972 / ATCC 24843) (Fission yeast)).